A 557-amino-acid polypeptide reads, in one-letter code: E3 ubiquitin-protein ligase rnf168 (557 aa).

Residues 16 to 55 (CPICQEILLEPVTLPCKHTLCNPCFQMTVEKASLCCPFCR) form an RING-type zinc finger. Residues 112–130 (LCQPGEIRQEYEAEVSKIE) carry the LR motif 1 motif. The short motif at 145-153 (EDYIQKLLA) is the UMI motif element. 2 consecutive short sequence motifs (MIU motif) follow at residues 170 to 193 (MEEQ…VSNA) and 422 to 445 (RRRQ…KELK). The short motif at 449-460 (RGKGSPDEYELR) is the LR motif 2 element. The interval 482-543 (PLRKEIPVQD…GINVLKPINK (62 aa)) is disordered. Residues 490–500 (QDNSRNTQSEY) are compositionally biased toward polar residues. The segment covering 508–521 (PSRKNSVRSARVRQ) has biased composition (basic residues).

The protein belongs to the RNF168 family. Monomer.

It is found in the nucleus. It catalyses the reaction S-ubiquitinyl-[E2 ubiquitin-conjugating enzyme]-L-cysteine + [acceptor protein]-L-lysine = [E2 ubiquitin-conjugating enzyme]-L-cysteine + N(6)-ubiquitinyl-[acceptor protein]-L-lysine.. Its pathway is protein modification; protein ubiquitination. Its function is as follows. E3 ubiquitin-protein ligase required for accumulation of repair proteins to sites of DNA damage. Acts with ube2n/ubc13 to amplify the rnf8-dependent histone ubiquitination. Recruited to sites of DNA damage at double-strand breaks (DSBs) by binding to ubiquitinated histone H2A and ubiquitinates histone H2A and H2AX, leading to amplify the rnf8-dependent H2A ubiquitination and promoting the formation of 'Lys-63'-linked ubiquitin conjugates. This leads to concentrate ubiquitinated histones H2A and H2AX at DNA lesions to the threshold required for recruitment of tp53bp1 and brca1. Catalyzes monoubiquitination of 'Lys-13' and 'Lys-15' of nucleosomal histone H2A (H2AK13Ub and H2AK15Ub, respectively). In Xenopus laevis (African clawed frog), this protein is E3 ubiquitin-protein ligase rnf168.